Consider the following 253-residue polypeptide: Vacuolar v-SNARE NYV1 (253 aa).

Topologically, residues 1–231 are cytoplasmic; sequence MKRFNVSYVE…EIMWWQKVKN (231 aa). The disordered stretch occupies residues 147-166; that stretch reads LNSSGNGQSSNGNGQNTISD. Low complexity predominate over residues 148–162; it reads NSSGNGQSSNGNGQN. One can recognise a v-SNARE coiled-coil homology domain in the interval 167–227; that stretch reads IGDATEDQIK…VNIKEIMWWQ (61 aa). The chain crosses the membrane as a helical; Anchor for type IV membrane protein span at residues 232-252; it reads ITLLTFTIILFVSAAFMFFYL. A topological domain (vacuolar) is located at residue W253.

The protein belongs to the synaptobrevin family. In terms of assembly, present in a pentameric cis-SNARE complex composed of the v-SNAREs NYV1, VTI1 and YKT6, and the t-SNAREs VAM3 and VAM7 on vacuolar membranes. Interacts in trans with the cognate t-SNARE VAM3 during the docking step of homotypic vacuolar fusion. Interacts with the vacuolar transporter chaperone (VTC) complex and the vacuolar Ca(2+)-ATPase PMC1.

It is found in the vacuole membrane. Functionally, vacuolar v-SNARE required for docking. Only involved in homotypic vacuole fusion. Required for Ca(2+) efflux from the vacuolar lumen, a required signal for subsequent membrane fusion events, by inhibiting vacuolar Ca(2+)-ATPase PMC1 and promoting Ca(2+) release when forming trans-SNARE assemblies during the docking step. The protein is Vacuolar v-SNARE NYV1 (NYV1) of Saccharomyces cerevisiae (strain ATCC 204508 / S288c) (Baker's yeast).